Consider the following 194-residue polypeptide: dCTP deaminase, dUMP-forming (194 aa).

DCTP contacts are provided by residues 104–109, D122, 130–132, Q151, Y165, K172, and Q176; these read RSSLGR and TLE. Residue E132 is the Proton donor/acceptor of the active site.

This sequence belongs to the dCTP deaminase family. As to quaternary structure, homotrimer.

The enzyme catalyses dCTP + 2 H2O = dUMP + NH4(+) + diphosphate. It functions in the pathway pyrimidine metabolism; dUMP biosynthesis; dUMP from dCTP: step 1/1. Bifunctional enzyme that catalyzes both the deamination of dCTP to dUTP and the hydrolysis of dUTP to dUMP without releasing the toxic dUTP intermediate. The sequence is that of dCTP deaminase, dUMP-forming from Dictyoglomus turgidum (strain DSM 6724 / Z-1310).